Consider the following 397-residue polypeptide: Probable tRNA sulfurtransferase (397 aa).

Positions 60 to 165 (HPVIEKLQEV…KEGTYITAYD (106 aa)) constitute a THUMP domain. ATP-binding positions include 183 to 184 (ML), 208 to 209 (HF), arginine 265, glycine 287, and glutamine 296.

It belongs to the ThiI family.

It is found in the cytoplasm. The catalysed reaction is [ThiI sulfur-carrier protein]-S-sulfanyl-L-cysteine + a uridine in tRNA + 2 reduced [2Fe-2S]-[ferredoxin] + ATP + H(+) = [ThiI sulfur-carrier protein]-L-cysteine + a 4-thiouridine in tRNA + 2 oxidized [2Fe-2S]-[ferredoxin] + AMP + diphosphate. It catalyses the reaction [ThiS sulfur-carrier protein]-C-terminal Gly-Gly-AMP + S-sulfanyl-L-cysteinyl-[cysteine desulfurase] + AH2 = [ThiS sulfur-carrier protein]-C-terminal-Gly-aminoethanethioate + L-cysteinyl-[cysteine desulfurase] + A + AMP + 2 H(+). The protein operates within cofactor biosynthesis; thiamine diphosphate biosynthesis. In terms of biological role, catalyzes the ATP-dependent transfer of a sulfur to tRNA to produce 4-thiouridine in position 8 of tRNAs, which functions as a near-UV photosensor. Also catalyzes the transfer of sulfur to the sulfur carrier protein ThiS, forming ThiS-thiocarboxylate. This is a step in the synthesis of thiazole, in the thiamine biosynthesis pathway. The sulfur is donated as persulfide by IscS. This is Probable tRNA sulfurtransferase from Anoxybacillus flavithermus (strain DSM 21510 / WK1).